A 972-amino-acid polypeptide reads, in one-letter code: MAGFRSLLVLLLVFPSGCVGFRSPLSVFKRFKETTRSFSNECLGTTRPVIPIDSSDFALDIRMPGVTPKQSDTYFCMSVRLPMDEEAFVIDFKPRASMDTVHHMLLFGCNMPASTGNYWFCDEGTCTDKANILYAWARNAPPTRLPKGVGFRVGGETGSKYFVLQVHYGDISAFRDNHKDCSGVSLHLTRLPQPLIAGMYLMMSVDTVIPPGGKVVNSDISCHYKKYPMHVFAYRVHTHHLGKVVSGYRVRNGQWTLIGRQSPQLPQAFYPVEHPVDVSFGDILAARCVFTGEGRTEVTHIGGTSSDEMCNLYIMYYMEAKHAVSFMTCTQNVAPDIFRTIPPEANIPIPVKSDMVMMHGHHKETENKDKTSLLQQPKREEEGVLEQGDFYSLLSKLLGEREDVVHVHKYNPTEKAESESDLVAEIANVVQKKDLGRSDTRESAEQERGNAILVRDRIHKFHRLVSTLRPAESRVLSLQQPLPGEGTWEPEHTGDFHVEEALDWPGVYLLPGQVSGVALDPQNNLVIFHRGDHVWDGNSFDSKFVYQQRGLGPIEEDTILVIDPNNAAVLQSSGKNLFYLPHGLSIDKDGNYWVTDVALHQVFKLDPKSKEGPLLTLGRSMQPGSDQNHFCQPTDVAVDPDTGTIYVSDGYCNSRLVQFSPSGKFITQWGEASLESSPKPGQFRVPHSLALVPPLGQLCVADRENGRIQCFKTDTKEFVREIKHPSFGRNVFAISYIPGLLFAVNGKPYFEDQEPVQGFVMNFSSGEIIDVFKPVRKHFDMPHDIAASEDGTVYVGDAHTNTVWKFTSTEKMEHRSVKKAGIEVQEIKESEAVVETKMENKPASSELQKIQEKQKLVKEPGSGVPAVLITTLLVIPVVVLLAIALFIRWKKSRAFGDSERKLEASSGRVLGRLRGKGGGGLNLGNFFASRKGYSRKGFDRLSTEGSDQEKDEDASESEEEYSAPPPAPAPSS.

An N-terminal signal peptide occupies residues 1–20 (MAGFRSLLVLLLVFPSGCVG). Residues 1–494 (MAGFRSLLVL…EGTWEPEHTG (494 aa)) are peptidylglycine alpha-hydroxylating monooxygenase. A propeptide spanning residues 21-30 (FRSPLSVFKR) is cleaved from the precursor. At 31–873 (FKETTRSFSN…VPAVLITTLL (843 aa)) the chain is on the intragranular side. Intrachain disulfides connect cysteine 42/cysteine 181, cysteine 76/cysteine 121, cysteine 109/cysteine 126, cysteine 222/cysteine 329, and cysteine 288/cysteine 310. 2 residues coordinate Cu(2+): histidine 102 and histidine 103. Residues histidine 167, histidine 237, histidine 239, and methionine 309 each coordinate Cu(2+). The interval 495-817 (DFHVEEALDW…STEKMEHRSV (323 aa)) is peptidyl-alpha-hydroxyglycine alpha-amidating lyase. NHL repeat units follow at residues 498 to 541 (VEEA…NSFD), 567 to 608 (AAVL…LDPK), 617 to 662 (LGRS…FSPS), and 670 to 714 (GEAS…FKTD). Valine 517 serves as a coordination point for Ca(2+). Arginine 530 is an a protein binding site. A Zn(2+)-binding site is contributed by histidine 582. Residue leucine 584 participates in Ca(2+) binding. Cysteine 631 and cysteine 652 are disulfide-bonded. An a protein-binding site is contributed by tyrosine 651. Residue histidine 687 participates in Zn(2+) binding. A disulfide bond links cysteine 699 and cysteine 710. Arginine 703 is an a protein binding site. The N-linked (GlcNAc...) asparagine glycan is linked to asparagine 762. An NHL 5 repeat occupies 766-809 (GEIIDVFKPVRKHFDMPHDIAASEDGTVYVGDAHTNTVWKFTST). Histidine 783 serves as a coordination point for Zn(2+). Residue aspartate 784 coordinates Ca(2+). The chain crosses the membrane as a helical span at residues 874–897 (VIPVVVLLAIALFIRWKKSRAFGD). Over 898-972 (SERKLEASSG…APPPAPAPSS (75 aa)) the chain is Cytoplasmic. The segment at 925–942 (NFFASRKGYSRKGFDRLS) is interaction with RASSF9. Phosphoserine occurs at positions 929 and 942. The segment at 937 to 972 (GFDRLSTEGSDQEKDEDASESEEEYSAPPPAPAPSS) is disordered. A Phosphothreonine modification is found at threonine 943. Serine 946 is subject to Phosphoserine; by UHMK1. Acidic residues predominate over residues 949 to 961 (EKDEDASESEEEY). Phosphoserine is present on serine 957. A compositionally biased stretch (pro residues) spans 963 to 972 (APPPAPAPSS).

The protein in the C-terminal section; belongs to the peptidyl-alpha-hydroxyglycine alpha-amidating lyase family. This sequence in the N-terminal section; belongs to the copper type II ascorbate-dependent monooxygenase family. Monomer. Interacts with RASSF9. Requires Zn(2+) as cofactor. Cu(2+) is required as a cofactor.

It localises to the cytoplasmic vesicle. Its subcellular location is the secretory vesicle membrane. The enzyme catalyses a [peptide]-C-terminal glycine + 2 L-ascorbate + O2 = a [peptide]-C-terminal (2S)-2-hydroxyglycine + 2 monodehydro-L-ascorbate radical + H2O. It catalyses the reaction a [peptide]-C-terminal (2S)-2-hydroxyglycine = a [peptide]-C-terminal amide + glyoxylate. The catalysed reaction is N-dodecanoylglycine + 2 L-ascorbate + O2 = N-dodecanoyl-(2S)-hydroxyglycine + 2 monodehydro-L-ascorbate radical + H2O. It carries out the reaction N-dodecanoyl-(2S)-hydroxyglycine = dodecanamide + glyoxylate. The enzyme catalyses N-(9Z,12Z,15Z)-octadecatrienoylglycine + 2 L-ascorbate + O2 = N-(9Z,12Z,15Z)-octadecatrienoyl-(2S)-hydroxyglycine + 2 monodehydro-L-ascorbate radical + H2O. It catalyses the reaction N-(9Z,12Z,15Z)-octadecatrienoyl-(2S)-hydroxyglycine = (9Z,12Z,15Z)-octadecatrienamide + glyoxylate. The catalysed reaction is N-(9Z-octadecenoyl)glycine + 2 L-ascorbate + O2 = N-(9Z-octadecenoyl)-(2S)-hydroxyglycine + 2 monodehydro-L-ascorbate radical + H2O. It carries out the reaction N-(9Z-octadecenoyl)-(2S)-hydroxyglycine = (9Z)-octadecenamide + glyoxylate. The enzyme catalyses N-tetradecanoylglycine + 2 L-ascorbate + O2 = N-tetradecanoyl-(2S)-hydroxyglycine + 2 monodehydro-L-ascorbate radical + H2O. It catalyses the reaction N-tetradecanoyl-(2S)-hydroxyglycine = tetradecamide + glyoxylate. The catalysed reaction is N-decanoylglycine + 2 L-ascorbate + O2 = N-decanoyl-(2S)-hydroxyglycine + 2 monodehydro-L-ascorbate radical + H2O. It carries out the reaction N-decanoyl-(2S)-hydroxyglycine = decanamide + glyoxylate. The enzyme catalyses N-octanoylglycine + 2 L-ascorbate + O2 = N-octanoyl-(2S)-hydroxyglycine + 2 monodehydro-L-ascorbate radical + H2O. It catalyses the reaction N-octanoyl-(2S)-hydroxyglycine = octanamide + glyoxylate. Its activity is regulated as follows. PAM activity is inhibited by EDTA, phenylglyoxal and diethyl pyrocarbonate. PAL activity is stimulated by cadmium and inhibited by mercury. Bifunctional enzyme that catalyzes amidation of the C-terminus of proteins. Alpha-amidation is present at the C-terminus of many endocrine hormones and neuropeptides and is required for their activity. C-terminal amidation also takes place in response to protein fragmentation triggered by oxidative stress, promoting degradation of amidated protein fragments by the proteasome. Alpha-amidation involves two sequential reactions, both of which are catalyzed by separate catalytic domains of the enzyme. The first step, catalyzed by peptidyl alpha-hydroxylating monooxygenase (PHM) domain, is the copper-, ascorbate-, and O2- dependent stereospecific hydroxylation (with S stereochemistry) at the alpha-carbon (C-alpha) of the C-terminal glycine of the peptidylglycine substrate. The second step, catalyzed by the peptidylglycine amidoglycolate lyase (PAL) domain, is the zinc-dependent cleavage of the N-C-alpha bond, producing the alpha-amidated peptide and glyoxylate. Similarly, catalyzes the two-step conversion of an N-fatty acylglycine to a primary fatty acid amide and glyoxylate. The protein is Peptidyl-glycine alpha-amidating monooxygenase (PAM) of Bos taurus (Bovine).